The primary structure comprises 188 residues: Threonylcarbamoyl-AMP synthase (188 aa).

Positions 3 to 188 (QLSSTQVTPV…RSGLVLRNGQ (186 aa)) constitute a YrdC-like domain.

It belongs to the SUA5 family. TsaC subfamily.

It is found in the cytoplasm. It catalyses the reaction L-threonine + hydrogencarbonate + ATP = L-threonylcarbamoyladenylate + diphosphate + H2O. In terms of biological role, required for the formation of a threonylcarbamoyl group on adenosine at position 37 (t(6)A37) in tRNAs that read codons beginning with adenine. Catalyzes the conversion of L-threonine, HCO(3)(-)/CO(2) and ATP to give threonylcarbamoyl-AMP (TC-AMP) as the acyladenylate intermediate, with the release of diphosphate. The protein is Threonylcarbamoyl-AMP synthase of Shewanella denitrificans (strain OS217 / ATCC BAA-1090 / DSM 15013).